A 394-amino-acid polypeptide reads, in one-letter code: Elongation factor Tu (394 aa).

The tr-type G domain occupies 10–204; it reads KPHVNVGTIG…ALDSYIPEPE (195 aa). A G1 region spans residues 19-26; sequence GHVDHGKT. Residue 19–26 participates in GTP binding; it reads GHVDHGKT. A Mg(2+)-binding site is contributed by Thr26. Positions 60–64 are G2; that stretch reads GITIS. The tract at residues 81-84 is G3; it reads DCPG. GTP contacts are provided by residues 81–85 and 136–139; these read DCPGH and NKCD. A G4 region spans residues 136–139; it reads NKCD. Residues 174 to 176 form a G5 region; sequence SAL.

The protein belongs to the TRAFAC class translation factor GTPase superfamily. Classic translation factor GTPase family. EF-Tu/EF-1A subfamily. As to quaternary structure, monomer.

It localises to the cytoplasm. The catalysed reaction is GTP + H2O = GDP + phosphate + H(+). Its function is as follows. GTP hydrolase that promotes the GTP-dependent binding of aminoacyl-tRNA to the A-site of ribosomes during protein biosynthesis. This Alteromonas mediterranea (strain DSM 17117 / CIP 110805 / LMG 28347 / Deep ecotype) protein is Elongation factor Tu.